The primary structure comprises 303 residues: Probable alpha-L-glutamate ligase 1 (303 aa).

Positions 104 to 287 constitute an ATP-grasp domain; sequence LQLLSRKGVG…IAGLIYSFIE (184 aa). ATP contacts are provided by residues K141, 178–179, D187, and 211–213; these read EF and RSN. 3 residues coordinate Mg(2+): D248, E260, and N262. Mn(2+) contacts are provided by D248, E260, and N262.

It belongs to the RimK family. Mg(2+) serves as cofactor. Requires Mn(2+) as cofactor.

This is Probable alpha-L-glutamate ligase 1 from Hahella chejuensis (strain KCTC 2396).